The following is an 82-amino-acid chain: Small ribosomal subunit protein bS18 (82 aa).

The disordered stretch occupies residues 1 to 20 (MAEVSSSTVRRPFHRRRKTC).

This sequence belongs to the bacterial ribosomal protein bS18 family. Part of the 30S ribosomal subunit. Forms a tight heterodimer with protein bS6.

Functionally, binds as a heterodimer with protein bS6 to the central domain of the 16S rRNA, where it helps stabilize the platform of the 30S subunit. In Allorhizobium ampelinum (strain ATCC BAA-846 / DSM 112012 / S4) (Agrobacterium vitis (strain S4)), this protein is Small ribosomal subunit protein bS18.